The following is a 344-amino-acid chain: Meiotic recombination protein DMC1 homolog (344 aa).

Positions 1–22 are disordered; the sequence is MMASLKAEETSQMQLVEREEND. 133–140 lines the ATP pocket; the sequence is GEFRSGKT. Arginine 235 provides a ligand contact to dsDNA. The ssDNA site is built by arginine 235, phenylalanine 238, arginine 241, arginine 247, and arginine 315. DsDNA contacts are provided by arginine 241 and arginine 247.

The protein belongs to the RecA family. DMC1 subfamily. Double stacked ring-shaped homooctamer. Interacts with BRCA2A and BRCA2B. As to expression, expressed in mitotic and/or meiotic tissues. Expressed in roots, leaves and anthers and carpels of young fower buds.

The protein resides in the nucleus. Its function is as follows. May participate in meiotic recombination, specifically in homologous strand assimilation, which is required for the resolution of meiotic double-strand breaks. Mediates interhomolog recombination during meiosis. In Arabidopsis thaliana (Mouse-ear cress), this protein is Meiotic recombination protein DMC1 homolog.